The following is a 442-amino-acid chain: C4-dicarboxylate transport protein (442 aa).

8 helical membrane passes run 10 to 30 (VQVL…PSLG), 40 to 60 (FIKL…VSGI), 77 to 97 (LLYF…IVNI), 144 to 164 (FTQG…FALL), 183 to 203 (VIFV…FGAM), 221 to 241 (LMIT…GLIA), 331 to 351 (LLGV…SGFI), and 354 to 374 (AATL…ILGI). A disordered region spans residues 418-442 (LPTIEPDVHSEERGEGRELDSLRPA). A compositionally biased stretch (basic and acidic residues) spans 423-442 (PDVHSEERGEGRELDSLRPA).

Belongs to the dicarboxylate/amino acid:cation symporter (DAACS) (TC 2.A.23) family.

The protein localises to the cell membrane. Its function is as follows. Responsible for the transport of dicarboxylates such as succinate, fumarate, and malate across the membrane. The chain is C4-dicarboxylate transport protein from Deinococcus deserti (strain DSM 17065 / CIP 109153 / LMG 22923 / VCD115).